The following is a 310-amino-acid chain: Carbamate kinase 1 (310 aa).

Belongs to the carbamate kinase family.

The protein resides in the cytoplasm. The catalysed reaction is hydrogencarbonate + NH4(+) + ATP = carbamoyl phosphate + ADP + H2O + H(+). Its pathway is metabolic intermediate metabolism; carbamoyl phosphate degradation; CO(2) and NH(3) from carbamoyl phosphate: step 1/1. The chain is Carbamate kinase 1 (arcC1) from Staphylococcus aureus (strain COL).